Consider the following 285-residue polypeptide: MSEHNVYGAAQPAQPAQPAQPRTRIRTHHLQKMKAEGHKWAMLTAYDYSTARIFDEAGIPVLLVGDSAANVVYGYDTTVPVSIDELIPLVRGVVRGAPHALVVADLPFGSYEAGPAAALAAATRFMKEGGAHAVKLEGGERVAEQIAHLTAAGIPVMAHIGFTPQSVNSLGGFRVQGRGDAAEQTIADAIAVAEAGAFSVVMEMVPAGLATQITGKLTIPTIGIGAGPNCDGQVLVWQDMAGMSSGKSARFVKRFADIGGELRRAATQYAHEVAAGVFPADEHCF.

The segment at 1-23 (MSEHNVYGAAQPAQPAQPAQPRT) is disordered. Positions 9 to 21 (AAQPAQPAQPAQP) are enriched in low complexity. Positions 66 and 105 each coordinate Mg(2+). 3-methyl-2-oxobutanoate is bound by residues 66 to 67 (DS), Asp105, and Lys135. Glu137 lines the Mg(2+) pocket. Catalysis depends on Glu203, which acts as the Proton acceptor.

The protein belongs to the PanB family. Homodecamer; pentamer of dimers. Mg(2+) is required as a cofactor.

The protein resides in the cytoplasm. The enzyme catalyses 3-methyl-2-oxobutanoate + (6R)-5,10-methylene-5,6,7,8-tetrahydrofolate + H2O = 2-dehydropantoate + (6S)-5,6,7,8-tetrahydrofolate. Its pathway is cofactor biosynthesis; (R)-pantothenate biosynthesis; (R)-pantoate from 3-methyl-2-oxobutanoate: step 1/2. Its function is as follows. Catalyzes the reversible reaction in which hydroxymethyl group from 5,10-methylenetetrahydrofolate is transferred onto alpha-ketoisovalerate to form ketopantoate. The chain is 3-methyl-2-oxobutanoate hydroxymethyltransferase from Mycobacterium avium (strain 104).